The primary structure comprises 61 residues: Photosystem II reaction center X protein (61 aa).

A helical transmembrane segment spans residues 26–46 (IGSFIAAALLIVVPATAFLIF).

The protein belongs to the PsbX family. Type 2 subfamily. In terms of assembly, PSII consists of a core antenna complex that captures photons, and an electron transfer chain that converts photonic excitation into a charge separation. PSII forms dimeric complexes.

Its subcellular location is the cellular thylakoid membrane. In terms of biological role, involved in the binding and/or turnover of quinones at the Q(B) site of Photosystem II. The chain is Photosystem II reaction center X protein from Prochlorococcus marinus (strain AS9601).